Reading from the N-terminus, the 41-residue chain is Alpha-conotoxin-like Pu1.2 (41 aa).

Residues L1–R21 constitute a propeptide that is removed on maturation. 2 cysteine pairs are disulfide-bonded: C24–C30 and C25–C37. At C37 the chain carries Cysteine amide. A propeptide spanning residues G38 to R41 is cleaved from the precursor.

It belongs to the conotoxin A superfamily. In terms of processing, non-native isomers 'ribbon' (with disulfide connectivity C1-C4, C2-C3) and 'beads' (with disulfide connectivity C1-C2, C3-C4) also inhibit high voltage-activated (HVA) calcium channel currents in rat DRG neurons (25-30% inhibition at 1 uM toxin). Post-translationally, mutants Pu1.2(9-16), [C3S; C9S]Pu1.2 and [C4S]Pu1.2(1-9) are all C-terminally amidated. As to expression, expressed by the venom duct.

Its subcellular location is the secreted. Alpha-conotoxins act on postsynaptic membranes, they bind to the nicotinic acetylcholine receptors (nAChR) and thus inhibit them. This toxin also inhibits high voltage-activated (HVA) calcium channel currents in rat DRG neurons (27% inhibition at 1 uM toxin) probably by activating GABA(B) receptors (GABBR1 and/or GABBR2). The protein is Alpha-conotoxin-like Pu1.2 of Conus pulicarius (Flea-bitten cone).